The primary structure comprises 583 residues: Complement factor I (583 aa).

Residues 1 to 18 (MKLLHVFLLFLCFHLSFC) form the signal peptide. 16 cysteine pairs are disulfide-bonded: Cys33/Cys255, Cys43/Cys54, Cys48/Cys59, Cys61/Cys93, Cys67/Cys86, Cys75/Cys106, Cys141/Cys181, Cys154/Cys214, Cys186/Cys196, Cys229/Cys247, Cys259/Cys271, Cys266/Cys284, Cys278/Cys293, Cys327/Cys453, Cys365/Cys381, and Cys373/Cys444. The region spanning 55–108 (IEGTCICKLPYQCPKNGTTVCATNGRSFPTYCQQKSLECLRPGTKFLNNGTCTA) is the Kazal-like domain. N-linked (GlcNAc...) asparagine glycans are attached at residues Asn70, Asn103, Asn173, and Asn177. The region spanning 114 to 212 (VSLKHGNTDS…TMGYQDLADV (99 aa)) is the SRCR domain. LDL-receptor class A domains are found at residues 213–257 (VCYT…LCCK) and 258–294 (ACQGKSFHCKSGVCIPSQYRCNGEVDCITGEDEVGCE). Residues Lys239, Asp242, Ile244, Asp246, Asp252, and Glu253 each contribute to the Ca(2+) site. Residues Tyr276, Asn279, Glu281, Asp283, Asp289, and Glu290 each contribute to the Ca(2+) site. The Peptidase S1 domain occupies 340–574 (IVGGKRAQLG…YFDWISYHVG (235 aa)). Catalysis depends on charge relay system residues His380 and Asp429. Asn464 and Asn494 each carry an N-linked (GlcNAc...) asparagine glycan. Intrachain disulfides connect Cys467-Cys531, Cys495-Cys510, and Cys521-Cys550. The active-site Charge relay system is the Ser525. An N-linked (GlcNAc...) asparagine glycan is attached at Asn536.

Belongs to the peptidase S1 family. Heterodimer of a light and heavy chains; disulfide-linked. The fully processed and mature protein circulates as a zymogen, and is allosterically activated by substrate-induced remodeling of the active site. As to expression, plasma.

It is found in the secreted. The protein resides in the extracellular space. It catalyses the reaction Inactivates complement subcomponents C3b, iC3b and C4b by proteolytic cleavage.. Functionally, responsible for cleaving the alpha-chains of C4b and C3b in the presence of the cofactors C4-binding protein and factor H respectively. This is Complement factor I (CFI) from Pongo abelii (Sumatran orangutan).